The following is a 653-amino-acid chain: MNDKISKLESSILQLTEEVKQLESKQASKELEIRTLVDNAINSQNPAQERELINKLFTESLIDLKLKAEKIQTLERYRQEIITNLLVEQKQPNDTSIISAWEQLKISSFRINPNNNNNNSNNTNSSDSNQNYSSVILNGSLTEDSTSTISPDSTKNRDEEEIIRWEIDRNEISYNREAKLGSGAFGSVYKGIVRGKEVAIKKLTQTVFEENTMNEFKKEVSLMAKLRNPHLLLFMGACTAPEDLSIVTELMPKGSVHSLLRAKEDTSDFITFKRAILIARDTVLGMTWLHASNILHLDLKPANLLVDQNWVVKVADFGLSKYMKPDSKDKLLGQAGSPLYMAPEMLVNQPYDGKVDVFSFSILLWELLTKQEPYNKLYSSYPQLVEGVVNKKNRPIIPDYFPTRLKDLLARCWDHYPSRRPSFAEISKQRILETILIDGLILDSSARQFWSQYYMGKEEVPWNSFIVNFSLYCGFESNLSADDIKIKFLKLLLVPVDSDMVTIDNFGKILTWVGPLTNGREFFDKVYSICSIKGFMAATSSKNASQYLAGKKTGTYILRFSSDPGSYAISYLNKNKEIIHARVIYKQGSGYIHHGGQTHYATLDDLIKNTFKSLGIKEPFEGGPFHALTVAASSSKPFNIAGAYIPVAPSKKI.

Residues 112-133 (NPNNNNNNSNNTNSSDSNQNYS) are disordered. Residues 174-432 (YNREAKLGSG…FAEISKQRIL (259 aa)) form the Protein kinase domain. ATP is bound by residues 180-188 (LGSGAFGSV) and Lys201. Asp298 (proton acceptor) is an active-site residue. The SH2 domain occupies 534 to 625 (GFMAATSSKN…IKEPFEGGPF (92 aa)).

This sequence belongs to the protein kinase superfamily. TKL Ser/Thr protein kinase family. SH2 domain-containing protein kinase subfamily.

It is found in the membrane. It catalyses the reaction L-seryl-[protein] + ATP = O-phospho-L-seryl-[protein] + ADP + H(+). It carries out the reaction L-threonyl-[protein] + ATP = O-phospho-L-threonyl-[protein] + ADP + H(+). In terms of biological role, required for proper chemotaxis and phagocytosis; proper spatiotemporal control of F-actin levels in chemotaxing cells. Negative regulator of the PI3K (phosphatidylinositol 3 kinase) pathway. Predominantly phosphorylates serines and threonines and tyrosines at a lower level. In Dictyostelium discoideum (Social amoeba), this protein is Dual specificity protein kinase shkB (shkB).